Reading from the N-terminus, the 473-residue chain is Isocitrate dehydrogenase [NADP] (473 aa).

Position 104 (Thr-104) interacts with NADP(+). Residues Ser-113, Asn-115, Arg-119, Arg-129, and Arg-153 each contribute to the D-threo-isocitrate site. Asp-362 contributes to the Mg(2+) binding site. Residues 394-400 (HGTAPKH), Asn-407, Tyr-446, and Arg-450 contribute to the NADP(+) site.

The protein belongs to the isocitrate and isopropylmalate dehydrogenases family. In terms of assembly, homodimer. Mg(2+) serves as cofactor. It depends on Mn(2+) as a cofactor.

The catalysed reaction is D-threo-isocitrate + NADP(+) = 2-oxoglutarate + CO2 + NADPH. With respect to regulation, inhibited by either oxaloacetate or glyoxylate. Also inhibited by the adenine nucleotides AMP, ADP and ATP and by NADPH, which inhibits the activity by 28% when it is added to the assay mixture at 0.25 mM. In terms of biological role, catalyzes the oxidative decarboxylation of isocitrate to 2-oxoglutarate and carbon dioxide with the concomitant reduction of NADP(+). The protein is Isocitrate dehydrogenase [NADP] of Nostoc sp. (strain PCC 7120 / SAG 25.82 / UTEX 2576).